The chain runs to 178 residues: Large ribosomal subunit protein uL6 (178 aa).

The protein belongs to the universal ribosomal protein uL6 family. In terms of assembly, part of the 50S ribosomal subunit.

Functionally, this protein binds to the 23S rRNA, and is important in its secondary structure. It is located near the subunit interface in the base of the L7/L12 stalk, and near the tRNA binding site of the peptidyltransferase center. In Streptococcus pneumoniae (strain 70585), this protein is Large ribosomal subunit protein uL6.